A 408-amino-acid polypeptide reads, in one-letter code: Sex comb on midleg-like protein 4 (408 aa).

A phosphoserine mark is found at S55 and S65. The segment at 274-338 (AGGPATTTSG…TRRPSSRNPS (65 aa)) is disordered. The span at 278–287 (ATTTSGSRTN) shows a compositional bias: polar residues. Over residues 288 to 306 (PVPSGGSSSPGLRLPASSP) the composition is skewed to low complexity. Positions 340-406 (WTVEDVVRFV…CYHIDKLKQA (67 aa)) constitute an SAM domain.

The protein belongs to the SCM family.

The protein localises to the nucleus. In terms of biological role, putative Polycomb group (PcG) protein. PcG proteins act by forming multiprotein complexes, which are required to maintain the transcriptionally repressive state of homeotic genes throughout development. This Mus musculus (Mouse) protein is Sex comb on midleg-like protein 4 (Scml4).